Here is a 639-residue protein sequence, read N- to C-terminus: Muscarinic acetylcholine receptor M3 (639 aa).

Residues 1–115 (MLTHYQLCFQ…DPLGGHAVWQ (115 aa)) are Extracellular-facing. 6 N-linked (GlcNAc...) asparagine glycosylation sites follow: N16, N44, N45, N54, N97, and N101. Residues 116–139 (VVLIAFLTGIIALVTIIGNILVIV) form a helical membrane-spanning segment. The Cytoplasmic portion of the chain corresponds to 140 to 152 (SFKVNKQLKTVNN). The chain crosses the membrane as a helical span at residues 153 to 173 (YFLLSLACADLIIGVISMNLF). Residues 174–190 (TTYIIMGHWALGNLACD) lie on the Extracellular side of the membrane. C189 and C269 are disulfide-bonded. A helical transmembrane segment spans residues 191–212 (LWLSIDYVASNASVMNLLVISF). At 213–232 (DRYFSITRPLTYRAKRTTKR) the chain is on the cytoplasmic side. A helical membrane pass occupies residues 233 to 255 (AGVMIGLAWIISFVLWAPAILFW). Residues 256–277 (QYFVGKRTVPLDECFIQFLSEP) lie on the Extracellular side of the membrane. The chain crosses the membrane as a helical span at residues 278-300 (IITFGTAIAAFYLPVTIMSILYW). At 301–542 (RIYKETEKRT…LIKEKKAAQT (242 aa)) the chain is on the cytoplasmic side. Disordered stretches follow at residues 370 to 404 (PNTDQGDQEHSSSDSWNNNDAAASLENSASSDEED) and 431 to 471 (LPSS…GGSF). The segment covering 382–393 (SDSWNNNDAAAS) has biased composition (low complexity). A compositionally biased stretch (basic and acidic residues) spans 443–454 (ELQKSDTDSQEK). Residues 543-563 (LSAILFAFIITWTPYNIMVLV) traverse the membrane as a helical segment. The Extracellular segment spans residues 564-576 (NTFCDCVPKTVWN). Residues 577-596 (LGYWLCYINSTVNPVCYALC) form a helical membrane-spanning segment. Residues 597–639 (NKMFRNTFKMLLLCQCDKRKRRKQQYQQRQSVIFHKRIPREAS) lie on the Cytoplasmic side of the membrane.

The protein belongs to the G-protein coupled receptor 1 family. Muscarinic acetylcholine receptor subfamily. CHRM3 sub-subfamily. In terms of tissue distribution, brain, heart atria, and ventricle.

It localises to the cell membrane. The protein resides in the postsynaptic cell membrane. The muscarinic acetylcholine receptor mediates various cellular responses, including inhibition of adenylate cyclase, breakdown of phosphoinositides and modulation of potassium channels through the action of G proteins. Primary transducing effect is Pi turnover. The chain is Muscarinic acetylcholine receptor M3 (CHRM3) from Gallus gallus (Chicken).